Reading from the N-terminus, the 293-residue chain is Phosphatidylcholine-sterol acyltransferase (293 aa).

Asparagine 26 carries an N-linked (GlcNAc...) asparagine glycan. The Nucleophile role is filled by serine 123. N-linked (GlcNAc...) asparagine glycosylation occurs at asparagine 179. An intrachain disulfide couples cysteine 220 to cysteine 263. Aspartate 252 acts as the Charge relay system in catalysis. Residue asparagine 280 is glycosylated (N-linked (GlcNAc...) asparagine). Residue histidine 284 is the Charge relay system of the active site.

Belongs to the AB hydrolase superfamily. Lipase family.

The protein localises to the secreted. The enzyme catalyses a sterol + a 1,2-diacyl-sn-glycero-3-phosphocholine = a sterol ester + a 1-acyl-sn-glycero-3-phosphocholine. APOA1 is the most potent activator in plasma. Also activated by APOE, APOC1 and APOA4. Its function is as follows. Central enzyme in the extracellular metabolism of plasma lipoproteins. Synthesized mainly in the liver and secreted into plasma where it converts cholesterol and phosphatidylcholines (lecithins) to cholesteryl esters and lysophosphatidylcholines on the surface of high and low density lipoproteins (HDLs and LDLs). The cholesterol ester is then transported back to the liver. Has a preference for plasma 16:0-18:2 or 18:O-18:2 phosphatidylcholines. Also produced in the brain by primary astrocytes, and esterifies free cholesterol on nascent APOE-containing lipoproteins secreted from glia and influences cerebral spinal fluid (CSF) APOE- and APOA1 levels. Together with APOE and the cholesterol transporter ABCA1, plays a key role in the maturation of glial-derived, nascent lipoproteins. Required for remodeling high-density lipoprotein particles into their spherical forms. In Gerbilliscus gambianus (Gambian gerbil), this protein is Phosphatidylcholine-sterol acyltransferase (LCAT).